A 145-amino-acid polypeptide reads, in one-letter code: Hemoglobin fetal subunit beta (145 aa).

One can recognise a Globin domain in the interval 1-145 (MLSAEEKAAV…VANALAHRYH (145 aa)). Heme b-binding residues include histidine 62 and histidine 91.

Belongs to the globin family. Heterotetramer of two alpha chains and two beta chains. In terms of tissue distribution, red blood cells.

Functionally, involved in oxygen transport from the lung to the various peripheral tissues. This Bos taurus (Bovine) protein is Hemoglobin fetal subunit beta.